Reading from the N-terminus, the 1551-residue chain is Envelopment polyprotein (1551 aa).

The first 17 residues, 1-17, serve as a signal peptide directing secretion; that stretch reads MSKRVLIIAVVVYLVFT. At 18 to 546 the chain is on the lumenal side; sequence TQNQITGNHT…CRMSSRPTVA (529 aa). The disordered stretch occupies residues 24-66; it reads GNHTTINSSSPSTTEASSTPTVSRTPQTTTTSTAVSTTITATT. N-linked (GlcNAc...) asparagine; by host glycosylation is found at Asn-25 and Asn-30. Residues 31-66 show a composition bias toward low complexity; the sequence is SSSPSTTEASSTPTVSRTPQTTTTSTAVSTTITATT. N-linked (GlcNAc...) asparagine; by host glycans are attached at residues Asn-80, Asn-142, and Asn-413. A helical transmembrane segment spans residues 547–567; it reads LLLGIWIGCGYILTCIFSFLL. The Cytoplasmic portion of the chain corresponds to 568-675; it reads YHLILFFANC…ISVGIFLKRT (108 aa). Residues 676–696 form a helical membrane-spanning segment; it reads TWLVVLLVLLGLAISPVQGAP. The Lumenal segment spans residues 697–704; it reads TEVSNVKQ. A helical transmembrane segment spans residues 705 to 725; that stretch reads DGDYSICYFIFGCLVTAALLL. Over 726–823 the chain is Cytoplasmic; the sequence is KVKRTNSNGI…REKLFTTGLQ (98 aa). A helical membrane pass occupies residues 824–844; it reads LFINKTNVVVFALIMCFLLLL. Topologically, residues 845-1451 are lumenal; it reads TGHNASAFDS…GDFFKHYIGS (607 aa). 4 N-linked (GlcNAc...) asparagine; by host glycosylation sites follow: Asn-848, Asn-1201, Asn-1258, and Asn-1420. Cys-1023 and Cys-1216 are oxidised to a cystine. Residues 1452-1472 traverse the membrane as a helical segment; that stretch reads IAVGVLGTVLPFALLILFFIY. At 1473-1551 the chain is on the cytoplasmic side; the sequence is GDKMLWPFKV…KKEKKLSEIA (79 aa).

Belongs to the nairovirus envelope glycoprotein family. In terms of assembly, heterodimer with glycoprotein C; in prefusion state. As to quaternary structure, heterodimer with glycoprotein N; in prefusion state. Homotrimeric; in postfusion state. Specific enzymatic cleavage by host MBTPS1/S1P/SKI-1 endopeptidase yield glycoprotein N. Specific enzymatic cleavages by host furin-like protease and MBTPS1/S1P endopeptidase yield GP38. Post-translationally, glycosylated.

It localises to the host endoplasmic reticulum membrane. It is found in the virion membrane. Its subcellular location is the host Golgi apparatus membrane. Functionally, glycoprotein N and glycoprotein C interact with each other and are present at the surface of the virion. Glycoprotein N probably locks the Gn-Gc complex in a prefusion state. Glycoprotein N and glycoprotein C are able to attach the virion to host cell receptors. This attachment induces virion internalization predominantly through clathrin-dependent endocytosis. Its function is as follows. Glycoprotein C and glycoprotein N interact with each other and are present at the surface of the virion. The spikes at the surface of the virion are formed by an N-terminal extension of glycoprotein C. Glycoprotein N and glycoprotein C are able to attach the virion to host cell receptors. This attachment induces virion internalization predominantly through clathrin-dependent endocytosis. Class II fusion protein that promotes fusion of viral membrane with host endosomal membrane after endocytosis of the virion. Exposure to potassium is necessary for the conformational change leading to fusion. The polypeptide is Envelopment polyprotein (GP) (Amblyomma variegatum (Tropical bont tick)).